The chain runs to 99 residues: uncharacterized protein (99 aa).

Positions 1–19 (MLGMIRWVVEGTLVAMLLS) are cleaved as a signal peptide. A disordered region spans residues 71–99 (DGFGRINDSGPKRRGRDQSQYSSRFVELD).

Its subcellular location is the cytoplasm. This is an uncharacterized protein from Saccharomyces cerevisiae (strain ATCC 204508 / S288c) (Baker's yeast).